A 465-amino-acid chain; its full sequence is ATP synthase subunit beta (465 aa).

Residue 152–159 coordinates ATP; it reads GGAGVGKT.

It belongs to the ATPase alpha/beta chains family. In terms of assembly, F-type ATPases have 2 components, CF(1) - the catalytic core - and CF(0) - the membrane proton channel. CF(1) has five subunits: alpha(3), beta(3), gamma(1), delta(1), epsilon(1). CF(0) has three main subunits: a(1), b(2) and c(9-12). The alpha and beta chains form an alternating ring which encloses part of the gamma chain. CF(1) is attached to CF(0) by a central stalk formed by the gamma and epsilon chains, while a peripheral stalk is formed by the delta and b chains.

The protein localises to the cell inner membrane. The enzyme catalyses ATP + H2O + 4 H(+)(in) = ADP + phosphate + 5 H(+)(out). Its function is as follows. Produces ATP from ADP in the presence of a proton gradient across the membrane. The catalytic sites are hosted primarily by the beta subunits. The chain is ATP synthase subunit beta from Campylobacter hominis (strain ATCC BAA-381 / DSM 21671 / CCUG 45161 / LMG 19568 / NCTC 13146 / CH001A).